Reading from the N-terminus, the 324-residue chain is Phospho-N-acetylmuramoyl-pentapeptide-transferase (324 aa).

Helical transmembrane passes span 5 to 25 (AIVIAMAVSFLITVVLSPLFI), 57 to 77 (IMILLAIVATTLWITPKIAGL), 81 to 101 (TYLLLLVTVGYGVLGFLDDMI), 117 to 137 (FIGQLLIAAIFFAVYRQSGFS), 147 to 167 (WSVDLGWAYGVLLLFMLVGGS), 176 to 196 (LDGLLAGTAAIAFGAYAVLAW), 203 to 223 (VAVFCVAVVGAVLGFLVFNAH), 227 to 247 (VFMGDTGSLALGGAIAAVAVL), 250 to 270 (LELLLVIIGGVFVIETLSVII), and 302 to 322 (IVVTFWAVGLLFAMLGIYIEV).

Belongs to the glycosyltransferase 4 family. MraY subfamily. It depends on Mg(2+) as a cofactor.

The protein localises to the cell membrane. The catalysed reaction is UDP-N-acetyl-alpha-D-muramoyl-L-alanyl-gamma-D-glutamyl-meso-2,6-diaminopimeloyl-D-alanyl-D-alanine + di-trans,octa-cis-undecaprenyl phosphate = di-trans,octa-cis-undecaprenyl diphospho-N-acetyl-alpha-D-muramoyl-L-alanyl-D-glutamyl-meso-2,6-diaminopimeloyl-D-alanyl-D-alanine + UMP. It participates in cell wall biogenesis; peptidoglycan biosynthesis. Functionally, catalyzes the initial step of the lipid cycle reactions in the biosynthesis of the cell wall peptidoglycan: transfers peptidoglycan precursor phospho-MurNAc-pentapeptide from UDP-MurNAc-pentapeptide onto the lipid carrier undecaprenyl phosphate, yielding undecaprenyl-pyrophosphoryl-MurNAc-pentapeptide, known as lipid I. The chain is Phospho-N-acetylmuramoyl-pentapeptide-transferase from Geobacillus kaustophilus (strain HTA426).